The following is a 118-amino-acid chain: Small ribosomal subunit protein mS37 (118 aa).

One can recognise a CHCH domain in the interval glutamate 42 to arginine 84. Short sequence motifs (cx9C motif) lie at residues cysteine 45–cysteine 55 and cysteine 66–cysteine 76. Disulfide bonds link cysteine 45/cysteine 76 and cysteine 55/cysteine 66. The disordered stretch occupies residues methionine 86–threonine 105. The segment covering isoleucine 89–leucine 99 has biased composition (polar residues).

It belongs to the mitochondrion-specific ribosomal protein mS37 family. In terms of assembly, component of the mitochondrial ribosome small subunit (28S) which comprises a 12S rRNA and about 30 distinct proteins.

Its subcellular location is the mitochondrion. It is found in the nucleus. This Mus musculus (Mouse) protein is Small ribosomal subunit protein mS37 (Chchd1).